Reading from the N-terminus, the 207-residue chain is Guanylate kinase (207 aa).

Residues 6–185 enclose the Guanylate kinase-like domain; sequence GLLIVLSGPS…AKNRIQSIVE (180 aa). 13–20 serves as a coordination point for ATP; it reads GPSGVGKG.

This sequence belongs to the guanylate kinase family.

The protein localises to the cytoplasm. The enzyme catalyses GMP + ATP = GDP + ADP. Its function is as follows. Essential for recycling GMP and indirectly, cGMP. In Staphylococcus epidermidis (strain ATCC 35984 / DSM 28319 / BCRC 17069 / CCUG 31568 / BM 3577 / RP62A), this protein is Guanylate kinase.